The primary structure comprises 620 residues: 1-deoxy-D-xylulose-5-phosphate synthase (620 aa).

Thiamine diphosphate contacts are provided by residues His-80 and 121 to 123 (GHS). Asp-152 lines the Mg(2+) pocket. Residues 153-154 (GA), Asn-181, Tyr-288, and Glu-370 contribute to the thiamine diphosphate site. Residue Asn-181 coordinates Mg(2+).

This sequence belongs to the transketolase family. DXPS subfamily. Homodimer. Mg(2+) is required as a cofactor. Thiamine diphosphate serves as cofactor.

It carries out the reaction D-glyceraldehyde 3-phosphate + pyruvate + H(+) = 1-deoxy-D-xylulose 5-phosphate + CO2. It participates in metabolic intermediate biosynthesis; 1-deoxy-D-xylulose 5-phosphate biosynthesis; 1-deoxy-D-xylulose 5-phosphate from D-glyceraldehyde 3-phosphate and pyruvate: step 1/1. Functionally, catalyzes the acyloin condensation reaction between C atoms 2 and 3 of pyruvate and glyceraldehyde 3-phosphate to yield 1-deoxy-D-xylulose-5-phosphate (DXP). This chain is 1-deoxy-D-xylulose-5-phosphate synthase, found in Shigella boydii serotype 18 (strain CDC 3083-94 / BS512).